Consider the following 604-residue polypeptide: Cell division cycle protein CDT1 (604 aa).

It belongs to the Cdt1 family. In terms of assembly, associates with the MCM2-7 complex. Interacts with MCM2, ORC1, ORC2 and ORC6.

It is found in the cytoplasm. The protein resides in the nucleus. Its function is as follows. DNA replication licensing factor, required for pre-replication complex assembly. Faithful duplication of the genetic material requires 'once per cell cycle' DNA replication initiation and elongation. Central to this control is the tightly regulated formation of prereplicative complexes (preRCs) at future origins of DNA replication. Required for the recruitment of the MCM2-7 helicase complex to the replication origins. This chain is Cell division cycle protein CDT1 (TAH11), found in Saccharomyces cerevisiae (strain ATCC 204508 / S288c) (Baker's yeast).